Here is a 388-residue protein sequence, read N- to C-terminus: Phosphopentomutase (388 aa).

6 residues coordinate Mn(2+): Asp11, Asp283, His288, Asp324, His325, and His336.

It belongs to the phosphopentomutase family. Mn(2+) serves as cofactor.

It is found in the cytoplasm. It catalyses the reaction 2-deoxy-alpha-D-ribose 1-phosphate = 2-deoxy-D-ribose 5-phosphate. It carries out the reaction alpha-D-ribose 1-phosphate = D-ribose 5-phosphate. It participates in carbohydrate degradation; 2-deoxy-D-ribose 1-phosphate degradation; D-glyceraldehyde 3-phosphate and acetaldehyde from 2-deoxy-alpha-D-ribose 1-phosphate: step 1/2. Functionally, isomerase that catalyzes the conversion of deoxy-ribose 1-phosphate (dRib-1-P) and ribose 1-phosphate (Rib-1-P) to deoxy-ribose 5-phosphate (dRib-5-P) and ribose 5-phosphate (Rib-5-P), respectively. This chain is Phosphopentomutase, found in Enterococcus faecalis (strain ATCC 700802 / V583).